Here is a 58-residue protein sequence, read N- to C-terminus: Large ribosomal subunit protein bL32 (58 aa).

Residues 1–20 show a composition bias toward basic residues; it reads MALPKHKKSKSKRDKRRTHQ. The interval 1–26 is disordered; the sequence is MALPKHKKSKSKRDKRRTHQKLTAPN.

It belongs to the bacterial ribosomal protein bL32 family.

This Desulfatibacillum aliphaticivorans protein is Large ribosomal subunit protein bL32.